Here is a 358-residue protein sequence, read N- to C-terminus: Peroxidase 54 (358 aa).

Positions 1–31 (MAVTSSSSTCDGFFIISLIVIVSSLFGTSSA) are cleaved as a signal peptide. Gln-32 carries the pyrrolidone carboxylic acid modification. Asn-34 and Asn-44 each carry an N-linked (GlcNAc...) asparagine glycan. Intrachain disulfides connect Cys-42-Cys-122, Cys-75-Cys-80, Cys-128-Cys-330, and Cys-207-Cys-239. His-73 (proton acceptor) is an active-site residue. Residues Asp-74, Val-77, Gly-79, Asp-81, and Ser-83 each coordinate Ca(2+). 3 N-linked (GlcNAc...) asparagine glycosylation sites follow: Asn-103, Asn-161, and Asn-166. Pro-170 contributes to the substrate binding site. An N-linked (GlcNAc...) asparagine glycan is attached at Asn-178. Heme b is bound at residue His-200. Thr-201 provides a ligand contact to Ca(2+). Asn-218, Asn-228, and Asn-242 each carry an N-linked (GlcNAc...) asparagine glycan. Ca(2+) is bound by residues Asp-252, Thr-255, and Asp-260. Asn-298 is a glycosylation site (N-linked (GlcNAc...) asparagine).

Belongs to the peroxidase family. Classical plant (class III) peroxidase subfamily. Heme b serves as cofactor. Ca(2+) is required as a cofactor.

It localises to the secreted. The protein localises to the vacuole. The enzyme catalyses 2 a phenolic donor + H2O2 = 2 a phenolic radical donor + 2 H2O. Its function is as follows. Removal of H(2)O(2), oxidation of toxic reductants, biosynthesis and degradation of lignin, suberization, auxin catabolism, response to environmental stresses such as wounding, pathogen attack and oxidative stress. These functions might be dependent on each isozyme/isoform in each plant tissue. The polypeptide is Peroxidase 54 (PER54) (Arabidopsis thaliana (Mouse-ear cress)).